We begin with the raw amino-acid sequence, 660 residues long: Leucine-rich repeat transmembrane protein FLRT2 (660 aa).

Positions 1–35 (MGLQTTKWPGRGAFILKFWLIISLGLYLQVSKLLA) are cleaved as a signal peptide. 2 disulfides stabilise this stretch: cysteine 36–cysteine 42 and cysteine 40–cysteine 49. Residues 36-63 (CPSVCRCDRNFVYCNERSLTSVPLGIPE) form the LRRNT domain. At 36–540 (CPSVCRCDRN…QTTSHSMGSP (505 aa)) the chain is on the extracellular side. LRR repeat units lie at residues 62–87 (PEGV…LHNV), 88–108 (QSVH…MNLP), 109–131 (KNVR…ALAQ), 132–157 (LLKL…AFRE), 159–181 (ISLK…LPVD), 183–202 (QELR…AFQN), 203–228 (LTSL…TFSH), 229–251 (LTKL…DLPG), 252–274 (THLI…AFAN), and 275–298 (LRKL…VFDH). The N-linked (GlcNAc...) asparagine glycan is linked to asparagine 202. In terms of domain architecture, LRRCT spans 310–362 (NPWFCDCSIKWVTEWLKYIPSSLNVRGFMCQGPEQVRGMAVRELNMNLLSCPT). 2 cysteine pairs are disulfide-bonded: cysteine 314-cysteine 339 and cysteine 316-cysteine 360. A compositionally biased stretch (low complexity) spans 371-396 (TPAPSTVSPTTQSPTLSVPSPSRGSV). Positions 371-413 (TPAPSTVSPTTQSPTLSVPSPSRGSVPPAPTPSKLPTIPDWDG) are disordered. The 99-residue stretch at 419–517 (PPISERIQLS…ICSEATTHAS (99 aa)) folds into the Fibronectin type-III domain. A helical membrane pass occupies residues 541–561 (FLLAGLIGGAVIFVLVVLLSV). The Cytoplasmic portion of the chain corresponds to 562-660 (FCWHMHKKGR…SVPDLEHCHT (99 aa)).

In terms of assembly, self-associates (via leucine-rich repeats), giving rise to homooligomers. Interacts with FGFR1. Interacts with FGFR2. Interacts (via extracellular domain) with ADGRL1/LPHN1. Interacts (via extracellular domain) with ADGRL3 (via olfactomedin-like domain). Interacts (via extracellular domain) with UNC5D (via the first Ig-like domain). Can also interact (via extracellular domain) with UNC5B, but with much lower affinity. Interacts (via extracellular domain) with FN1. In terms of processing, N-glycosylated. Post-translationally, proteolytic cleavage in the juxtamembrane region gives rise to a soluble ectodomain. Cleavage is probably effected by a metalloprotease. In terms of tissue distribution, detected in adult brain (at protein level).

It is found in the cell membrane. The protein resides in the endoplasmic reticulum membrane. It localises to the cell junction. Its subcellular location is the focal adhesion. The protein localises to the secreted. It is found in the extracellular space. The protein resides in the extracellular matrix. It localises to the synapse. Its subcellular location is the synaptosome. The protein localises to the microsome membrane. Its function is as follows. Functions in cell-cell adhesion, cell migration and axon guidance. Mediates cell-cell adhesion via its interactions with ADGRL3 and probably also other latrophilins that are expressed at the surface of adjacent cells. May play a role in the migration of cortical neurons during brain development via its interaction with UNC5D. Mediates axon growth cone collapse and plays a repulsive role in neuron guidance via its interaction with UNC5D, and possibly also other UNC-5 family members. Plays a role in fibroblast growth factor-mediated signaling cascades. Required for normal organization of the cardiac basement membrane during embryogenesis, and for normal embryonic epicardium and heart morphogenesis. The polypeptide is Leucine-rich repeat transmembrane protein FLRT2 (Mus musculus (Mouse)).